Here is a 1224-residue protein sequence, read N- to C-terminus: Probable serine/threonine-protein kinase DDB_G0292350 (1224 aa).

Disordered stretches follow at residues 57–98 and 252–284; these read MSGS…STQR and SSPS…DISN. Low complexity-rich tracts occupy residues 58 to 74 and 83 to 95; these read SGSI…FTSS and SSSN…SDNS. Coiled coils occupy residues 352–381 and 540–569; these read LFKQ…KQNN and DVQL…EYLT. Disordered stretches follow at residues 693–784 and 815–836; these read QPIP…FVIT and FTNN…TNNI. Positions 743–768 are enriched in low complexity; the sequence is NNNNNNNNNINNNNINNNNINNNKNG. The span at 772-784 shows a compositional bias: polar residues; that stretch reads GETPSPSSSFVIT. Residues 935–1193 form the Protein kinase domain; it reads FRDKIKLGTG…PEMLLHHTFL (259 aa). ATP-binding positions include 941 to 949 and lysine 964; that span reads LGTGAFGNV. Catalysis depends on aspartate 1063, which acts as the Proton acceptor.

It belongs to the protein kinase superfamily. Ser/Thr protein kinase family. Mg(2+) is required as a cofactor.

It catalyses the reaction L-seryl-[protein] + ATP = O-phospho-L-seryl-[protein] + ADP + H(+). It carries out the reaction L-threonyl-[protein] + ATP = O-phospho-L-threonyl-[protein] + ADP + H(+). This is Probable serine/threonine-protein kinase DDB_G0292350 from Dictyostelium discoideum (Social amoeba).